Consider the following 176-residue polypeptide: Ribosome maturation factor RimM (176 aa).

Residues 96–176 (PEDEFYWRDL…QILVDWDPDF (81 aa)) form the PRC barrel domain.

It belongs to the RimM family. As to quaternary structure, binds ribosomal protein uS19.

The protein resides in the cytoplasm. In terms of biological role, an accessory protein needed during the final step in the assembly of 30S ribosomal subunit, possibly for assembly of the head region. Essential for efficient processing of 16S rRNA. May be needed both before and after RbfA during the maturation of 16S rRNA. It has affinity for free ribosomal 30S subunits but not for 70S ribosomes. The sequence is that of Ribosome maturation factor RimM from Shewanella piezotolerans (strain WP3 / JCM 13877).